The chain runs to 296 residues: Nitrogenase iron protein (296 aa).

12–19 (GKGGIGKS) is an ATP binding site. Cys100 lines the [4Fe-4S] cluster pocket. The residue at position 103 (Arg103) is an ADP-ribosylarginine; by dinitrogenase reductase ADP-ribosyltransferase. Cys134 contributes to the [4Fe-4S] cluster binding site.

The protein belongs to the NifH/BchL/ChlL family. Homodimer. [4Fe-4S] cluster serves as cofactor. Post-translationally, the reversible ADP-ribosylation of Arg-103 inactivates the nitrogenase reductase and regulates nitrogenase activity.

The enzyme catalyses N2 + 8 reduced [2Fe-2S]-[ferredoxin] + 16 ATP + 16 H2O = H2 + 8 oxidized [2Fe-2S]-[ferredoxin] + 2 NH4(+) + 16 ADP + 16 phosphate + 6 H(+). Functionally, the key enzymatic reactions in nitrogen fixation are catalyzed by the nitrogenase complex, which has 2 components: the iron protein and the molybdenum-iron protein. This is Nitrogenase iron protein from Acidithiobacillus ferrooxidans (strain ATCC 23270 / DSM 14882 / CIP 104768 / NCIMB 8455) (Ferrobacillus ferrooxidans (strain ATCC 23270)).